The primary structure comprises 210 residues: Na(+)-translocating NADH-quinone reductase subunit D (210 aa).

Helical transmembrane passes span 11-31 (ILAPVLDNNPIALQVLGVCSA), 42-62 (FVMTIAVMFVTALSNFFVSLI), 72-92 (IIVQMAIIASLVIVVDQVLKA), 103-123 (VFVGLIITNCIVMGRAEAFAM), 131-151 (FIDGLGNGLGYGFVLITVGFF), and 178-198 (NGLMLLAPSAFFLIGFLIWAI).

Belongs to the NqrDE/RnfAE family. Composed of six subunits; NqrA, NqrB, NqrC, NqrD, NqrE and NqrF.

It is found in the cell inner membrane. The catalysed reaction is a ubiquinone + n Na(+)(in) + NADH + H(+) = a ubiquinol + n Na(+)(out) + NAD(+). Its function is as follows. NQR complex catalyzes the reduction of ubiquinone-1 to ubiquinol by two successive reactions, coupled with the transport of Na(+) ions from the cytoplasm to the periplasm. NqrA to NqrE are probably involved in the second step, the conversion of ubisemiquinone to ubiquinol. The sequence is that of Na(+)-translocating NADH-quinone reductase subunit D from Vibrio atlanticus (strain LGP32) (Vibrio splendidus (strain Mel32)).